The sequence spans 1534 residues: ABC transporter G family member 6 (1534 aa).

The span at M1–S11 shows a compositional bias: basic and acidic residues. Positions M1–K85 are disordered. Over residues N21–L65 the composition is skewed to low complexity. The ABC transporter 1 domain maps to V138–S385. Residue G177–S184 participates in ATP binding. One can recognise an ABC transmembrane type-2 1 domain in the interval R481–F757. 7 consecutive transmembrane segments (helical) span residues N486–W506, L521–F541, I566–W586, P592–L612, I625–F645, I652–L672, and V734–L754. Residues K781–S907 are disordered. Acidic residues predominate over residues I797–E808. Over residues S830–Y841 the composition is skewed to polar residues. Over residues N842–N856 the composition is skewed to low complexity. Residues T864–N873 are compositionally biased toward polar residues. The segment covering S874 to N896 has biased composition (low complexity). The span at E897 to G906 shows a compositional bias: basic and acidic residues. The 243-residue stretch at V924–G1166 folds into the ABC transporter 2 domain. G960–S967 contributes to the ATP binding site. The 274-residue stretch at L1256–I1529 folds into the ABC transmembrane type-2 2 domain. Helical transmembrane passes span I1261–V1281, L1296–V1316, Y1345–L1365, C1377–V1397, M1404–I1424, and I1506–F1526.

This sequence belongs to the ABC transporter superfamily. ABCG family. PDR (TC 3.A.1.205) subfamily.

The protein localises to the membrane. The polypeptide is ABC transporter G family member 6 (abcG6) (Dictyostelium discoideum (Social amoeba)).